A 227-amino-acid polypeptide reads, in one-letter code: 7-cyano-7-deazaguanine synthase (227 aa).

8–18 lines the ATP pocket; sequence FSGGQDSTTCL. Zn(2+)-binding residues include cysteine 187, cysteine 196, cysteine 199, and cysteine 202.

The protein belongs to the QueC family. Zn(2+) serves as cofactor.

It catalyses the reaction 7-carboxy-7-deazaguanine + NH4(+) + ATP = 7-cyano-7-deazaguanine + ADP + phosphate + H2O + H(+). It participates in purine metabolism; 7-cyano-7-deazaguanine biosynthesis. In terms of biological role, catalyzes the ATP-dependent conversion of 7-carboxy-7-deazaguanine (CDG) to 7-cyano-7-deazaguanine (preQ(0)). This chain is 7-cyano-7-deazaguanine synthase, found in Aliivibrio fischeri (strain MJ11) (Vibrio fischeri).